The following is a 383-amino-acid chain: Galactokinase (383 aa).

34 to 37 (EHTD) contacts substrate. 124–130 (GAGLSSS) is a binding site for ATP. Residues S130 and E162 each coordinate Mg(2+). D174 acts as the Proton acceptor in catalysis. Y223 is a substrate binding site.

The protein belongs to the GHMP kinase family. GalK subfamily.

The protein resides in the cytoplasm. The enzyme catalyses alpha-D-galactose + ATP = alpha-D-galactose 1-phosphate + ADP + H(+). Its pathway is carbohydrate metabolism; galactose metabolism. Functionally, catalyzes the transfer of the gamma-phosphate of ATP to D-galactose to form alpha-D-galactose-1-phosphate (Gal-1-P). The sequence is that of Galactokinase from Yersinia enterocolitica serotype O:8 / biotype 1B (strain NCTC 13174 / 8081).